Consider the following 136-residue polypeptide: Small ribosomal subunit protein uS19 (136 aa).

Belongs to the universal ribosomal protein uS19 family.

In terms of biological role, protein S19 forms a complex with S13 that binds strongly to the 16S ribosomal RNA. In Methanocorpusculum labreanum (strain ATCC 43576 / DSM 4855 / Z), this protein is Small ribosomal subunit protein uS19.